Here is an 88-residue protein sequence, read N- to C-terminus: uncharacterized protein (88 aa).

Transmembrane regions (helical) follow at residues 5 to 25 and 36 to 56; these read AIPF…LLFV and CYYL…VMIF.

The protein resides in the membrane. This is an uncharacterized protein from Saccharomyces cerevisiae (strain ATCC 204508 / S288c) (Baker's yeast).